The primary structure comprises 384 residues: GTPase Obg (384 aa).

An Obg domain is found at 1 to 159 (MKFIDEAKIE…RSLQLELKVL (159 aa)). Disordered regions lie at residues 20–46 (ATSFRREKFVPRGGPDGGDGGKGGSVW) and 129–149 (HFKSSVNRAPKQSTPGEEGET). Positions 33–43 (GPDGGDGGKGG) are enriched in gly residues. The span at 130–143 (FKSSVNRAPKQSTP) shows a compositional bias: polar residues. An OBG-type G domain is found at 160–348 (ADVGLLGMPN…LVHQINQYLA (189 aa)). GTP contacts are provided by residues 166 to 173 (GMPNAGKS), 191 to 195 (FTTLH), 213 to 216 (DIPG), 284 to 287 (NKLD), and 329 to 331 (SAL). Mg(2+) is bound by residues Ser173 and Thr193.

The protein belongs to the TRAFAC class OBG-HflX-like GTPase superfamily. OBG GTPase family. As to quaternary structure, monomer. Mg(2+) is required as a cofactor.

It is found in the cytoplasm. Functionally, an essential GTPase which binds GTP, GDP and possibly (p)ppGpp with moderate affinity, with high nucleotide exchange rates and a fairly low GTP hydrolysis rate; the half-life of the GTP-bound state is about 50 minutes. Plays a role in control of the cell cycle, stress response, ribosome biogenesis and in those bacteria that undergo differentiation, in morphogenesis control. This Neisseria gonorrhoeae (strain ATCC 700825 / FA 1090) protein is GTPase Obg.